Here is a 481-residue protein sequence, read N- to C-terminus: Cysteine--tRNA ligase (481 aa).

Cysteine 43 serves as a coordination point for Zn(2+). The short motif at 45–55 (ATVQGLPHIGH) is the 'HIGH' region element. Zn(2+) contacts are provided by cysteine 221, histidine 246, and glutamate 250. Residues 277 to 281 (KMSKS) carry the 'KMSKS' region motif. Lysine 280 contributes to the ATP binding site.

The protein belongs to the class-I aminoacyl-tRNA synthetase family. Monomer. The cofactor is Zn(2+).

The protein localises to the cytoplasm. It carries out the reaction tRNA(Cys) + L-cysteine + ATP = L-cysteinyl-tRNA(Cys) + AMP + diphosphate. The sequence is that of Cysteine--tRNA ligase from Mycobacterium sp. (strain JLS).